Reading from the N-terminus, the 197-residue chain is Xanthine phosphoribosyltransferase (197 aa).

Residues L20 and T27 each contribute to the xanthine site. 128–132 (ANGQA) is a binding site for 5-phospho-alpha-D-ribose 1-diphosphate. Residue K156 participates in xanthine binding.

It belongs to the purine/pyrimidine phosphoribosyltransferase family. Xpt subfamily. As to quaternary structure, homodimer.

The protein resides in the cytoplasm. It catalyses the reaction XMP + diphosphate = xanthine + 5-phospho-alpha-D-ribose 1-diphosphate. Its pathway is purine metabolism; XMP biosynthesis via salvage pathway; XMP from xanthine: step 1/1. Its function is as follows. Converts the preformed base xanthine, a product of nucleic acid breakdown, to xanthosine 5'-monophosphate (XMP), so it can be reused for RNA or DNA synthesis. This is Xanthine phosphoribosyltransferase from Lactococcus lactis subsp. lactis (strain IL1403) (Streptococcus lactis).